Consider the following 324-residue polypeptide: Transcriptional regulator protein Pur-beta (324 aa).

Positions 1–47 (MADGDSGSERGGGGGGGGGPGGFQPAPRGGGGGGGGPGGEQETQELA) are disordered. A2 carries the N-acetylalanine modification. Phosphoserine is present on residues S6 and S8. Gly residues predominate over residues 9–39 (ERGGGGGGGGGPGGFQPAPRGGGGGGGGPGG). Residue R28 is modified to Omega-N-methylarginine. Positions 37–263 (PGGEQETQEL…GVFLRVSEVK (227 aa)) are DNA-binding. Phosphothreonine is present on T43. The residue at position 113 (S113) is a Phosphoserine. The residue at position 164 (R164) is an Omega-N-methylarginine. An N6-acetyllysine modification is found at K279. Residues 297-307 (RQRDKLYERRG) are compositionally biased toward basic and acidic residues. The disordered stretch occupies residues 297–324 (RQRDKLYERRGGGSGGGDESEGEEVDED). The residue at position 306 (R306) is an Omega-N-methylarginine. S310 and S316 each carry phosphoserine. The span at 314–324 (DESEGEEVDED) shows a compositional bias: acidic residues.

Belongs to the PUR DNA-binding protein family. Homodimer, heterodimer with PURA and heterotrimer with PURA and YBX1/Y-box protein 1. Interacts with MYOCD and SRF.

The protein localises to the nucleus. Its function is as follows. Transcriptional regulator which can act as an activator or a repressor. Represses the transcription of ACTA2 in fibroblasts and smooth muscle cells via its ability to interact with the purine-rich strand of a MCAT-containing element in the 5' flanking region of the gene. Represses the transcription of MYOCD, capable of repressing all isoforms of MYOCD but the magnitude of the repressive effects is most notable for the SMC-specific isoforms. Promotes hepatic glucose production by activating the transcription of ADCY6, leading to cAMP accumulation, increased PKA activity, CREB activation, and increased transcription of PCK1 and G6PC genes. Has capacity to bind repeated elements in single-stranded DNA such as the purine-rich single strand of the PUR element located upstream of the MYC gene. Participates in transcriptional and translational regulation of alpha-MHC expression in cardiac myocytes by binding to the purine-rich negative regulatory (PNR) element. Modulates constitutive liver galectin-3 gene transcription by binding to its promoter. May play a role in the dendritic transport of a subset of mRNAs. In Mus musculus (Mouse), this protein is Transcriptional regulator protein Pur-beta (Purb).